A 401-amino-acid polypeptide reads, in one-letter code: Probable tRNA sulfurtransferase (401 aa).

Residues 60–165 (EAVMARLKHV…EDATYLTFRD (106 aa)) form the THUMP domain. ATP-binding positions include 183 to 184 (MI), 208 to 209 (HF), Arg-265, Gly-287, and Gln-296.

The protein belongs to the ThiI family.

It is found in the cytoplasm. The enzyme catalyses [ThiI sulfur-carrier protein]-S-sulfanyl-L-cysteine + a uridine in tRNA + 2 reduced [2Fe-2S]-[ferredoxin] + ATP + H(+) = [ThiI sulfur-carrier protein]-L-cysteine + a 4-thiouridine in tRNA + 2 oxidized [2Fe-2S]-[ferredoxin] + AMP + diphosphate. It carries out the reaction [ThiS sulfur-carrier protein]-C-terminal Gly-Gly-AMP + S-sulfanyl-L-cysteinyl-[cysteine desulfurase] + AH2 = [ThiS sulfur-carrier protein]-C-terminal-Gly-aminoethanethioate + L-cysteinyl-[cysteine desulfurase] + A + AMP + 2 H(+). It functions in the pathway cofactor biosynthesis; thiamine diphosphate biosynthesis. In terms of biological role, catalyzes the ATP-dependent transfer of a sulfur to tRNA to produce 4-thiouridine in position 8 of tRNAs, which functions as a near-UV photosensor. Also catalyzes the transfer of sulfur to the sulfur carrier protein ThiS, forming ThiS-thiocarboxylate. This is a step in the synthesis of thiazole, in the thiamine biosynthesis pathway. The sulfur is donated as persulfide by IscS. The sequence is that of Probable tRNA sulfurtransferase from Bacillus licheniformis (strain ATCC 14580 / DSM 13 / JCM 2505 / CCUG 7422 / NBRC 12200 / NCIMB 9375 / NCTC 10341 / NRRL NRS-1264 / Gibson 46).